Consider the following 462-residue polypeptide: Hydroxymethylglutaryl-CoA synthase (462 aa).

The Proton donor/acceptor role is filled by E86. Catalysis depends on C120, which acts as the Acyl-thioester intermediate. Positions 120, 211, 261, 270, 338, and 372 each coordinate (3S)-3-hydroxy-3-methylglutaryl-CoA. H261 (proton donor/acceptor) is an active-site residue.

It belongs to the thiolase-like superfamily. HMG-CoA synthase family.

It carries out the reaction acetoacetyl-CoA + acetyl-CoA + H2O = (3S)-3-hydroxy-3-methylglutaryl-CoA + CoA + H(+). It functions in the pathway siderophore biosynthesis. In terms of biological role, hydroxymethylglutaryl-CoA synthase involved in the biosynthesis of siderophore ferrichrome A which is contributing to organismal virulence. The first step of ferrichrome A biosynthesis is performed by the HMG-CoA synthase hcs1 which catalyzes the generation of HMG-CoA and CoA using acetoacetyl-CoA and acetyl-CoA as substrates. The enoyl-CoA isomerase/hydratase fer4 then catalyzes the conversion of hcs1-produced HMG-CoA to methylglutaconyl-CoA. The acyltransferase fer5 then fuses the fer4-generated methylglutaconyl-CoA with sid1-generated hydroxyornithine to yield methylglutaconyl hydroxyornithine. Methylglutaconyl hydroxyornithine is then available for use by the NRPS fer3 to generate ferrichrome A. The polypeptide is Hydroxymethylglutaryl-CoA synthase (Mycosarcoma maydis (Corn smut fungus)).